The primary structure comprises 159 residues: UPF0262 protein CCNA_02430 (159 aa).

This sequence belongs to the UPF0262 family.

The chain is UPF0262 protein CCNA_02430 from Caulobacter vibrioides (strain NA1000 / CB15N) (Caulobacter crescentus).